We begin with the raw amino-acid sequence, 293 residues long: Acidic endochitinase SE2 (293 aa).

An N-terminal signal peptide occupies residues 1–25; it reads MAAKIVSVLFLISLLIFASFESSHG. The GH18 domain maps to 26–293; sequence SQIVIYWGQN…GYSSAIKSSV (268 aa). 2 disulfides stabilise this stretch: Cys45/Cys91 and Cys75/Cys81. The Proton donor role is filled by Glu151. A disulfide bond links Cys183 and Cys212.

Belongs to the glycosyl hydrolase 18 family. Chitinase class II subfamily. In terms of tissue distribution, accumulates in leaves during infection.

Its subcellular location is the secreted. It is found in the extracellular space. It carries out the reaction Random endo-hydrolysis of N-acetyl-beta-D-glucosaminide (1-&gt;4)-beta-linkages in chitin and chitodextrins.. This protein functions as a defense against chitin containing fungal pathogens. This endochitinase also exhibits exochitinase activity, i.e. it is capable of hydrolyzing chito-oligosaccharides, including chitobiose. In Beta vulgaris (Sugar beet), this protein is Acidic endochitinase SE2 (SE2).